Here is a 278-residue protein sequence, read N- to C-terminus: MTTEPLALDFKSATLYAIRVVLHSADPDQLAEALGRRMADAGSFFENEAVVIDASRVSAPIDWPALVKALGAHKLPVIGVVAENGNLERARAAGLIPVELSAPRTQQSVDPAPPNHVSTPVPAAPEASRAAQEQLRSAMKGDAQAVPTRAARDTTEAASHTPAAPQSSTALVITKPLRSGQRVYARHTDLVVIGMVSQGAEVIADGNIHVYGPLRGKAMAGARGDTSARIFTTHLDAELLAVAGVYRVVEDRLDRNLHNQPALVRLNGDTLHIEALKS.

The disordered stretch occupies residues 104 to 167; the sequence is RTQQSVDPAP…ASHTPAAPQS (64 aa).

The protein belongs to the MinC family. In terms of assembly, interacts with MinD and FtsZ.

Cell division inhibitor that blocks the formation of polar Z ring septums. Rapidly oscillates between the poles of the cell to destabilize FtsZ filaments that have formed before they mature into polar Z rings. Prevents FtsZ polymerization. The protein is Probable septum site-determining protein MinC of Bordetella avium (strain 197N).